Here is a 1217-residue protein sequence, read N- to C-terminus: Sterol 3-beta-glucosyltransferase (1217 aa).

One can recognise a GRAM 1 domain in the interval 195 to 232 (EFVRKYFGISEEETLIGHYTGWLLQEVLIQGNLFITNS). A PH domain is found at 246–343 (AVVLCGKLKL…WVKCLKKQLF (98 aa)). The 67-residue stretch at 590–656 (AKIKDWFNLH…EDIEGYNEIL (67 aa)) folds into the GRAM 2 domain. UDP-alpha-D-glucose is bound by residues serine 766, arginine 767, aspartate 769, asparagine 1042, isoleucine 1072, histidine 1074, histidine 1087, serine 1090, glycine 1091, threonine 1092, aspartate 1111, and glutamine 1112.

It belongs to the glycosyltransferase 28 family.

The protein resides in the cytoplasm. It is found in the membrane. The catalysed reaction is a sterol + UDP-alpha-D-glucose = a sterol 3-beta-D-glucoside + UDP + H(+). It carries out the reaction ergosterol + UDP-alpha-D-glucose = ergosteryl 3-beta-D-glucoside + UDP + H(+). Functionally, sterol glycosyltransferase responsible for the glycosylation of ergosterol to form ergosterol-glucoside. This is Sterol 3-beta-glucosyltransferase from Vanderwaltozyma polyspora (strain ATCC 22028 / DSM 70294 / BCRC 21397 / CBS 2163 / NBRC 10782 / NRRL Y-8283 / UCD 57-17) (Kluyveromyces polysporus).